Consider the following 444-residue polypeptide: Deoxyguanosinetriphosphate triphosphohydrolase-like protein (444 aa).

The interval 1–26 (MTESLWHERRLTEEKKRRNDHRSPYQ) is disordered. The 192-residue stretch at 59–250 (RLTHSLEVSQ…MELADDIAYA (192 aa)) folds into the HD domain.

This sequence belongs to the dGTPase family. Type 2 subfamily.

This is Deoxyguanosinetriphosphate triphosphohydrolase-like protein from Shewanella sediminis (strain HAW-EB3).